A 353-amino-acid chain; its full sequence is MTIALGKFTKDEKDLFDIMDDWLRRDRFVFVGWSGLLLFPCAYFALGGWFTGTTFVTSWYTHGLASSYLEGCNFLTAAVSTPANSLAHSLLLLWGPKAQGDFTRWCQLGGLWAFVALHGAFALIGFMLRQFELARSVQLRPYNAIAFSGPIAVFVSVFLIYPLGQSGWFFAPSFGVAAIFRFILFFQGFHNWTLNPFHMMGVAGVLGAALLCAIHGATVENTLFEDGDGANTFRAFNPTQAEETYSMVTANRFWSQIFGVAFSNKRWLHFFMLFVPVTGLWMSALGVVGLALNLRAYDFVSQEIRAAEDPEFETFYTKNILLNEGIRAWMAAQDQPHENLIFPEEVLPRGNAL.

The residue at position 2 (T2) is an N-acetylthreonine. T2 is subject to Phosphothreonine. Residues 41–61 (CAYFALGGWFTGTTFVTSWYT) traverse the membrane as a helical segment. Residue H118 participates in chlorophyll a binding. The helical transmembrane segment at 125–141 (GFMLRQFELARSVQLRP) threads the bilayer. Pheophytin a is bound by residues Q130 and N143. A helical membrane pass occupies residues 153–166 (VFVSVFLIYPLGQS). Residue H198 coordinates chlorophyll a. Residues 208-228 (AALLCAIHGATVENTLFEDGD) traverse the membrane as a helical segment. Residues H215 and F262 each coordinate a plastoquinone. H215 provides a ligand contact to Fe cation. Residue H269 participates in Fe cation binding. Residues 279–295 (GLWMSALGVVGLALNLR) form a helical membrane-spanning segment.

This sequence belongs to the reaction center PufL/M/PsbA/D family. PSII is composed of 1 copy each of membrane proteins PsbA, PsbB, PsbC, PsbD, PsbE, PsbF, PsbH, PsbI, PsbJ, PsbK, PsbL, PsbM, PsbT, PsbX, PsbY, PsbZ, Psb30/Ycf12, at least 3 peripheral proteins of the oxygen-evolving complex and a large number of cofactors. It forms dimeric complexes. The D1/D2 heterodimer binds P680, chlorophylls that are the primary electron donor of PSII, and subsequent electron acceptors. It shares a non-heme iron and each subunit binds pheophytin, quinone, additional chlorophylls, carotenoids and lipids. There is also a Cl(-1) ion associated with D1 and D2, which is required for oxygen evolution. The PSII complex binds additional chlorophylls, carotenoids and specific lipids. serves as cofactor.

Its subcellular location is the plastid. The protein localises to the chloroplast thylakoid membrane. The enzyme catalyses 2 a plastoquinone + 4 hnu + 2 H2O = 2 a plastoquinol + O2. Photosystem II (PSII) is a light-driven water:plastoquinone oxidoreductase that uses light energy to abstract electrons from H(2)O, generating O(2) and a proton gradient subsequently used for ATP formation. It consists of a core antenna complex that captures photons, and an electron transfer chain that converts photonic excitation into a charge separation. The D1/D2 (PsbA/PsbD) reaction center heterodimer binds P680, the primary electron donor of PSII as well as several subsequent electron acceptors. D2 is needed for assembly of a stable PSII complex. This is Photosystem II D2 protein from Barbarea verna (Land cress).